The primary structure comprises 2253 residues: MKRHQFKSCIFELREILREIKNSRYFLDSWTKFDSVVSFTHIFFHQERFVKLLGPQTWSVLLSRDSQGSTSNRYFTIKGVVLLVVAVLIYRINNRNMVERKNLYLMGLLPIPMNSIGPRNDTLEESFWSPNINRLIVSLLYLPKGKKISESCFMDPKESTWVLPITQKCIMPESNWGSRWWRNWIGKKRDSSCKISNETVAGIEISFKEKDIKYLEFLFVSYMDDPIRKDHGWELFDRVSPRKKRNIINLNSGQLFEILAKHLICYLMSAFREKRPIEVEGFLKQQGAEATIPSNDIEHVSHLFSRNKWDISLQNCAQFHMWQFHQDLFVSWGKNQHESDFLRNVSRENLIWLDNMWLVNKDRFFSKVRNVSSNIQYDSTRSIFVQVTDSSQLKGSSDQSRENFDSISNEDSEYHTLINQTEIQQLKERLILWDPSSLQTERTEIESDRFPKYPSGYSSMSRLFTEREKQMNNHLFPEKIEEFLGNPTRSIRSFFSDRWSELHLVSNATERFTRDQKLLKKQQDVFSFVPSRRSEKKEMVDIFKIITYLQNTVSIHPISSDRGCDMVPKDEPDMDSSNKISFLNKNPFCDLFHLFHDRNKGRYTLHHDFESEERFQEMADLFTLSITEPDLVYHKGFAFSIDSYGLDQKKFLNEVFNSRDESKKNSLLVLPHIFYEENESFYRRIRKKWVRISCRNGLEDPKPKIVVFASNNIMEAVNQYRLIRNLIQIQYSTYGYIRNLSNRFFLMNRSDRNFEYGIQRDQIGNDTLNHITIMKYMINQHLLNVKKSQKKWFDPLISRTERSMNRDPNAYRYKWSNGSKNFQEHLEHFVSEQKNRFQVVFDRLRINQHSIDWSKVIDKQDLSKSLHFFLSKSLLFLSKSLTFFFVSIGNIPIHRSEIHIYELKGPNDQLCNQLLESIGVQIVHLNKLKPFLLDDHDTSQRSKFLINGGTISAFLFNKIPKWMIDSLHTRNNRRKFFDNTDSYFSMISHDRDNWLNPVKPFHRSSLISSFYKANLLRFLNNPHHFCFYSNKRFPFYAEKTRIDNYDLTYGQFLHISFIRNKIFSLCVGKKKHVFLERDTISPIESQVSDIFIPNDFPQSGDETYNLYKSQPLSTYCQPLSDMNLSDSEGKNLHQYLSFNSNMGLIHTPCSEKDLPSAKKRNLCLKKCVEKRQMYRAFQRDSAFSNLSKWNLFQTYMPWFLTSAGCKYINFILLDTFSDPLPILSSSHQFVSFFYDIMHGSDISWSILQIPLWAILPRWNLISEISSKCLQNILLPEEMIHRNNESPVPLKWTHLRSPNAREFLYSILFLLLVAGYLVRTHLLFISRVSSELQTELEKIKSLMIPSYMIELRKLLDRYPPPELNSFWLKNLFLVALEQLGDSLEEIRSSASGGNMLLSGGPTYGVKSIRSKKKDLNINLIDIIYLISIIPNPINSITFSRNTRHLSRTSKEIYSLIRKNVNSDWIDDQIESWVANSDLIDDEEREFLVQFSTLTTEKRIDQILLSLTHSDHLSKNDSGYQMIEQPGSIYLRYLVDIQKRYLMNYEFNRSCLAERRIFLAHYQTITYSQTPCGANSSHFPSHGKPFSLRLALPPSRGILVIGFIGTGRSYFVKYRVTNSYVPFITVFPNKFLDDNKGYLIDDIDIDDRDDIDIDDRDDDDLDTELLTMPNVLTMYMTPKIDQFEITLPLELAKAMSPCIIWIPNIHDLYVNESNYLSLGLLVNHLPRDCERCSTRNILVIASTHIPQKVDPALIAPNKSNTCIKIRRLLIPQQRKHFFILSYTRGFRLEKKMSHTNGFGSITMGSNARDLVALTNEVLSISITQKKSIIDTNTIRSALHRQTWDLRSQVRSVQYHEILFYQIGRAVAQNVLLSNCSIDPISIYMKKKSCKEGDSYLSKWYFELGTSMKKLTILLYLLSCSAGSVAQDLWSPPGPDEQNWITSYGFVENDSDLVHGLLESALVGYSRTECSQFDNDRVTLLLRSEPRNQLDMMQNGSCSIVDQRFLYEKYESGFEEGEGEGTLDLQQIEEDEDLFNHIVWAPRLWRPHGNLFDCIERPKKLGFPYWVRSFRDKRIIYHKEDKLQENDSEFLRSGTVQYQTRDRSSKEQGFFRISQFIWDPADQFFFLFKDQPFVSVFSRRESFADEEMSKGLITSQTNSPTSIYKRWLIKNTQEKHFELLIHRQRWLRTNTNSSLSNGSFRSNTLSESYQYLSNLFLSNNGTLLDQMTKTLLRKRWLFPDEMKHLIHAPGERFPIP.

1600–1607 (GFIGTGRS) serves as a coordination point for ATP.

The protein belongs to the Ycf2 family.

The protein resides in the plastid. It is found in the chloroplast stroma. Its function is as follows. Probable ATPase of unknown function. Its presence in a non-photosynthetic plant (Epifagus virginiana) and experiments in tobacco indicate that it has an essential function which is probably not related to photosynthesis. This Nymphaea alba (White water-lily) protein is Protein Ycf2.